A 613-amino-acid chain; its full sequence is Portal protein (613 aa).

Positions 577 to 613 (ATGGDHGIRQAPSARGDAEPDHAKSKPARDPPPGAGS) are disordered. A compositionally biased stretch (basic and acidic residues) spans 592 to 605 (GDAEPDHAKSKPAR).

It belongs to the herpesviridae portal protein family. In terms of assembly, homododecamerizes. Interacts with terminase subunits TRM1 and TRM3.

The protein localises to the virion. It is found in the host nucleus. In terms of biological role, forms a portal in the viral capsid through which viral DNA is translocated during DNA packaging. Assembles as a dodecamer at a single fivefold axe of the T=16 icosahedric capsid. Binds to the molecular motor that translocates the viral DNA, termed terminase. The chain is Portal protein from Homo sapiens (Human).